A 102-amino-acid chain; its full sequence is Small ribosomal subunit protein uS10 (102 aa).

The protein belongs to the universal ribosomal protein uS10 family. In terms of assembly, part of the 30S ribosomal subunit.

In terms of biological role, involved in the binding of tRNA to the ribosomes. The sequence is that of Small ribosomal subunit protein uS10 from Kosmotoga olearia (strain ATCC BAA-1733 / DSM 21960 / TBF 19.5.1).